Consider the following 331-residue polypeptide: Tetraacyldisaccharide 4'-kinase (331 aa).

57-64 (SVGGNGKT) contributes to the ATP binding site.

This sequence belongs to the LpxK family.

The catalysed reaction is a lipid A disaccharide + ATP = a lipid IVA + ADP + H(+). The protein operates within glycolipid biosynthesis; lipid IV(A) biosynthesis; lipid IV(A) from (3R)-3-hydroxytetradecanoyl-[acyl-carrier-protein] and UDP-N-acetyl-alpha-D-glucosamine: step 6/6. Functionally, transfers the gamma-phosphate of ATP to the 4'-position of a tetraacyldisaccharide 1-phosphate intermediate (termed DS-1-P) to form tetraacyldisaccharide 1,4'-bis-phosphate (lipid IVA). In Histophilus somni (strain 2336) (Haemophilus somnus), this protein is Tetraacyldisaccharide 4'-kinase.